A 213-amino-acid chain; its full sequence is Guanylate kinase (213 aa).

The Guanylate kinase-like domain maps to 10–189 (GLLLMVVAPS…AYADLAHIYH (180 aa)). 17-24 (APSGVGKT) lines the ATP pocket.

Belongs to the guanylate kinase family.

It is found in the cytoplasm. It carries out the reaction GMP + ATP = GDP + ADP. Functionally, essential for recycling GMP and indirectly, cGMP. This is Guanylate kinase (gmk) from Caulobacter vibrioides (strain ATCC 19089 / CIP 103742 / CB 15) (Caulobacter crescentus).